Here is a 282-residue protein sequence, read N- to C-terminus: Pantothenate synthetase (282 aa).

31-38 (MGYLHEGH) contacts ATP. His38 (proton donor) is an active-site residue. Gln62 contributes to the (R)-pantoate binding site. Beta-alanine is bound at residue Gln62. An ATP-binding site is contributed by 148-151 (GEKD). Gln154 provides a ligand contact to (R)-pantoate. ATP-binding positions include Val177 and 185 to 188 (YSSR).

The protein belongs to the pantothenate synthetase family. In terms of assembly, homodimer.

Its subcellular location is the cytoplasm. It carries out the reaction (R)-pantoate + beta-alanine + ATP = (R)-pantothenate + AMP + diphosphate + H(+). The protein operates within cofactor biosynthesis; (R)-pantothenate biosynthesis; (R)-pantothenate from (R)-pantoate and beta-alanine: step 1/1. Catalyzes the condensation of pantoate with beta-alanine in an ATP-dependent reaction via a pantoyl-adenylate intermediate. The protein is Pantothenate synthetase of Aquifex aeolicus (strain VF5).